We begin with the raw amino-acid sequence, 201 residues long: Small ribosomal subunit protein uS4 (201 aa).

Residues 91–157 (SRLDNVVYRA…LPFQVARETV (67 aa)) enclose the S4 RNA-binding domain.

Belongs to the universal ribosomal protein uS4 family. In terms of assembly, part of the 30S ribosomal subunit. Contacts protein S5. The interaction surface between S4 and S5 is involved in control of translational fidelity.

One of the primary rRNA binding proteins, it binds directly to 16S rRNA where it nucleates assembly of the body of the 30S subunit. Its function is as follows. With S5 and S12 plays an important role in translational accuracy. This Rhodococcus erythropolis (strain PR4 / NBRC 100887) protein is Small ribosomal subunit protein uS4.